Consider the following 264-residue polypeptide: Teichoic acids export ATP-binding protein TagH (264 aa).

The ABC transporter domain maps to 5–243 (VNIKNVTKEY…YEAFLNDFKK (239 aa)). ATP is bound at residue 57 to 64 (GINGSGKS).

Belongs to the ABC transporter superfamily. Teichoic acids exporter (TC 3.A.1.104.1) family. As to quaternary structure, the complex is composed of two ATP-binding proteins (TagH) and two transmembrane proteins (TagG).

The protein localises to the cell membrane. The catalysed reaction is ATP + H2O + teichoic acidSide 1 = ADP + phosphate + teichoic acidSide 2.. In terms of biological role, part of the ABC transporter complex TagGH involved in teichoic acids export. Responsible for energy coupling to the transport system. The sequence is that of Teichoic acids export ATP-binding protein TagH from Staphylococcus aureus (strain Mu50 / ATCC 700699).